Here is a 100-residue protein sequence, read N- to C-terminus: Cobalt transport protein CbiN (100 aa).

Transmembrane regions (helical) follow at residues 8–28 (LSNW…LIFV) and 69–89 (LLFS…VGLY).

The protein belongs to the CbiN family. As to quaternary structure, forms an energy-coupling factor (ECF) transporter complex composed of an ATP-binding protein (A component, CbiO), a transmembrane protein (T component, CbiQ) and 2 possible substrate-capture proteins (S components, CbiM and CbiN) of unknown stoichimetry.

The protein localises to the cell inner membrane. The protein operates within cofactor biosynthesis; adenosylcobalamin biosynthesis. In terms of biological role, part of the energy-coupling factor (ECF) transporter complex CbiMNOQ involved in cobalt import. The sequence is that of Cobalt transport protein CbiN from Nostoc sp. (strain PCC 7120 / SAG 25.82 / UTEX 2576).